A 393-amino-acid chain; its full sequence is Tryptophan 2,3-dioxygenase (393 aa).

Residues 56–60 (FIVTH) and Arg127 each bind substrate. His312 lines the heme pocket. Substrate is bound at residue Thr327.

This sequence belongs to the tryptophan 2,3-dioxygenase family. As to quaternary structure, homotetramer. Dimer of dimers. Heme is required as a cofactor.

The enzyme catalyses L-tryptophan + O2 = N-formyl-L-kynurenine. It participates in amino-acid degradation; L-tryptophan degradation via kynurenine pathway; L-kynurenine from L-tryptophan: step 1/2. Its pathway is pigment biosynthesis; ommochrome biosynthesis. With respect to regulation, stimulated by low concentrations of hydrogen peroxide (5 uM), ascorbate (0.1-0.3 mM), and sodium hydrosulfite (0.1 mM). Inhibited by high concentrations of hydrogen peroxide (0.1 mM), ascorbate (10 mM), and sodium hydrosulfite (1 mM). In terms of biological role, heme-dependent dioxygenase that catalyzes the oxidative cleavage of the L-tryptophan (L-Trp) pyrrole ring and converts L-tryptophan to N-formyl-L-kynurenine. Catalyzes the oxidative cleavage of the indole moiety. The chain is Tryptophan 2,3-dioxygenase from Aedes aegypti (Yellowfever mosquito).